Here is a 458-residue protein sequence, read N- to C-terminus: D-inositol 3-phosphate glycosyltransferase (458 aa).

Residue histidine 16 participates in 1D-myo-inositol 3-phosphate binding. UDP-N-acetyl-alpha-D-glucosamine-binding positions include 22-23 and glycine 30; that span reads QP. 1D-myo-inositol 3-phosphate-binding positions include 27–32, lysine 85, tyrosine 118, threonine 142, and arginine 162; that span reads DAGGMN. UDP-N-acetyl-alpha-D-glucosamine contacts are provided by arginine 236, lysine 241, and glutamine 302. Mg(2+) contacts are provided by tyrosine 311, arginine 312, and serine 314. Residues glutamate 324 and glutamate 332 each coordinate UDP-N-acetyl-alpha-D-glucosamine. Mg(2+) is bound at residue threonine 338. The tract at residues 428–458 is disordered; that stretch reads VAAQNVTGSSSRTRRPWRRRRSTLLPMTGRS. The span at 439 to 449 shows a compositional bias: basic residues; the sequence is RTRRPWRRRRS.

Belongs to the glycosyltransferase group 1 family. MshA subfamily. As to quaternary structure, homodimer.

It catalyses the reaction 1D-myo-inositol 3-phosphate + UDP-N-acetyl-alpha-D-glucosamine = 1D-myo-inositol 2-acetamido-2-deoxy-alpha-D-glucopyranoside 3-phosphate + UDP + H(+). Its function is as follows. Catalyzes the transfer of a N-acetyl-glucosamine moiety to 1D-myo-inositol 3-phosphate to produce 1D-myo-inositol 2-acetamido-2-deoxy-glucopyranoside 3-phosphate in the mycothiol biosynthesis pathway. The polypeptide is D-inositol 3-phosphate glycosyltransferase (Gordonia bronchialis (strain ATCC 25592 / DSM 43247 / BCRC 13721 / JCM 3198 / KCTC 3076 / NBRC 16047 / NCTC 10667) (Rhodococcus bronchialis)).